A 276-amino-acid chain; its full sequence is METLELQGAKLRYHQVGQGPVLIFIPGANGTGNIFLPLAEQLKDHFTVVAVDRRDYGESELTEPLPDSASNPDSDYRVKRDAQDIAELAKSLSDEPVYILGSSSGSIVAMHVLKDYPEVVKKIAFHEPPINTFLPDSTYWKDKNDDIVHQILTEGLEKGMKTFGETLNIAPIDAKMMSQPADTEEGRIEQYKRTMFWSEFEIRQYTHSDITLDDFTKYSDKITLLNGTDSRGSFPQDVNFYINKETGIPIVDIPGGHLGYIQKPEGFADVLLNMWG.

In terms of domain architecture, AB hydrolase-1 spans 20–137 (PVLIFIPGAN…PPINTFLPDS (118 aa)). The tract at residues 57–76 (GESELTEPLPDSASNPDSDY) is disordered.

It belongs to the AB hydrolase superfamily.

This is an uncharacterized protein from Staphylococcus aureus (strain N315).